Reading from the N-terminus, the 83-residue chain is Exodeoxyribonuclease 7 small subunit (83 aa).

Belongs to the XseB family. In terms of assembly, heterooligomer composed of large and small subunits.

It localises to the cytoplasm. The catalysed reaction is Exonucleolytic cleavage in either 5'- to 3'- or 3'- to 5'-direction to yield nucleoside 5'-phosphates.. In terms of biological role, bidirectionally degrades single-stranded DNA into large acid-insoluble oligonucleotides, which are then degraded further into small acid-soluble oligonucleotides. This is Exodeoxyribonuclease 7 small subunit from Rhodopseudomonas palustris (strain HaA2).